Here is a 375-residue protein sequence, read N- to C-terminus: Tubulinyl-Tyr carboxypeptidase 1 (375 aa).

Residues 1-33 show a composition bias toward low complexity; the sequence is MPGGKKVVPSGSSSASPNAAATTTAAAAAAAAA. The interval 1-69 is disordered; the sequence is MPGGKKVVPS…EEDLRDGGVP (69 aa). The span at 53-63 shows a compositional bias: acidic residues; sequence EEPEEEGEEDL. Active-site residues include cysteine 179, histidine 214, and serine 231. The interval 309–375 is disordered; sequence RDMRLKIGKG…PDLSGYQIRV (67 aa). The involved in heparin-binding and antiangiogenic activity stretch occupies residues 329–375; the sequence is KKDVSSPQRAQSSPHRRNSRSERRPSGEKKPAEPKAMPDLSGYQIRV. Residues 347 to 361 are compositionally biased toward basic and acidic residues; the sequence is SRSERRPSGEKKPAE.

This sequence belongs to the transglutaminase-like superfamily. Vasohibin family. Interacts with SVBP; interaction enhances VASH1 tyrosine carboxypeptidase activity. Post-translationally, ubiquitinated in vitro. Expressed at low level in proliferating endothelial cells at the sprouting front but highly expressed in nonproliferating endothelial cells in the termination zone.

The protein resides in the cytoplasm. It is found in the secreted. The enzyme catalyses C-terminal L-alpha-aminoacyl-L-glutamyl-L-glutamyl-L-tyrosyl-[tubulin] + H2O = C-terminal L-alpha-aminoacyl-L-glutamyl-L-glutamyl-[tubulin] + L-tyrosine. Tyrosine carboxypeptidase that removes the C-terminal tyrosine residue of alpha-tubulin, thereby regulating microtubule dynamics and function. Acts as an angiogenesis inhibitor: inhibits migration, proliferation and network formation by endothelial cells as well as angiogenesis. This inhibitory effect is selective to endothelial cells as it does not affect the migration of smooth muscle cells or fibroblasts. The sequence is that of Tubulinyl-Tyr carboxypeptidase 1 from Mus musculus (Mouse).